A 584-amino-acid polypeptide reads, in one-letter code: MTQVSKTIAKPSGNANLYSRLFSYYRVYKKLIFIALAGLCLFSFVDAGMIYFVKPLIDQGLSKADSHTLQLGALLVVAIFFLRGIASFTSSYAIAYISSKVTYRIRQQAFDKLLYLPRTYFDLNSRGSLISKIIYDTEQLSQSFSSAVVIAIRESVIILVLFSMMVYNSWQLTAIFLVIVPIIALIINKVSKRFKNISHKLQNSMGQVSNKTEQAILNQQEIVLLDTRTQISAQFEKTNNNNRQQNMKLQATSAISNPVIQLIASFAIAAVLLLASIDQVLNQLTPGSFTLILIAMGSLLKPLKQLSNINQQLQKGLIAAKSLFSFLDQQEEHDIGTKQLSKTCSNIRFNNFSFTYQGKTQPALSNFSLQIKGGTSVAFVGESGSGKSTLARLLLRLYQSPKQSILINDIAIEDYSLSSLRAQFAFVSQDIVLIDDTLANNISFGCNRDVTDSEIEQAAINANVMAFAKELPLGLNSEIGENGRNLSGGQRQRIAIARAMLRDASIIVLDEATSALDNHSEKHIQQALTRLTQHKTVLIIAHKLSSIQHVDEIIVINKGRLIEQGNHKTLQAKAGYYQSLYQSQ.

Transmembrane regions (helical) follow at residues 32 to 52 (IFIA…MIYF), 68 to 88 (TLQL…IASF), 146 to 166 (SAVV…SMMV), 167 to 187 (YNSW…ALII), 254 to 274 (AISN…VLLL), and 280 to 300 (VLNQ…GSLL). Positions 33–315 (FIALAGLCLF…LSNINQQLQK (283 aa)) constitute an ABC transmembrane type-1 domain. In terms of domain architecture, ABC transporter spans 347 to 583 (IRFNNFSFTY…AGYYQSLYQS (237 aa)). Residue 381–388 (GESGSGKS) participates in ATP binding.

The protein belongs to the ABC transporter superfamily. Lipid exporter (TC 3.A.1.106) family. As to quaternary structure, homodimer.

It is found in the cell inner membrane. The catalysed reaction is ATP + H2O + lipid A-core oligosaccharideSide 1 = ADP + phosphate + lipid A-core oligosaccharideSide 2.. Involved in lipopolysaccharide (LPS) biosynthesis. Translocates lipid A-core from the inner to the outer leaflet of the inner membrane. Transmembrane domains (TMD) form a pore in the inner membrane and the ATP-binding domain (NBD) is responsible for energy generation. The sequence is that of ATP-dependent lipid A-core flippase 2 from Colwellia psychrerythraea (strain 34H / ATCC BAA-681) (Vibrio psychroerythus).